The primary structure comprises 253 residues: Proteasome subunit alpha type-7 (253 aa).

It belongs to the peptidase T1A family. As to quaternary structure, the 26S proteasome consists of a 20S proteasome core and two 19S regulatory subunits. The 20S proteasome core is composed of 28 subunits that are arranged in four stacked rings, resulting in a barrel-shaped structure. The two end rings are each formed by seven alpha subunits, and the two central rings are each formed by seven beta subunits. The catalytic chamber with the active sites is on the inside of the barrel.

It is found in the cytoplasm. It localises to the nucleus. Its function is as follows. The proteasome is a multicatalytic proteinase complex which is characterized by its ability to cleave peptides with Arg, Phe, Tyr, Leu, and Glu adjacent to the leaving group at neutral or slightly basic pH. The proteasome has an ATP-dependent proteolytic activity. This Caenorhabditis elegans protein is Proteasome subunit alpha type-7 (pas-4).